Reading from the N-terminus, the 390-residue chain is Precorrin-6Y C(5,15)-methyltransferase [decarboxylating] (390 aa).

Belongs to the precorrin methyltransferase family.

The enzyme catalyses precorrin-6B + 2 S-adenosyl-L-methionine = precorrin-8X + 2 S-adenosyl-L-homocysteine + CO2 + 3 H(+). It functions in the pathway cofactor biosynthesis; adenosylcobalamin biosynthesis; cob(II)yrinate a,c-diamide from precorrin-2 (aerobic route): step 7/10. Its function is as follows. Catalyzes the methylation of both C-5 and C-15 in precorrin-6Y to form precorrin-8X. The protein is Precorrin-6Y C(5,15)-methyltransferase [decarboxylating] (cobL) of Mycobacterium tuberculosis (strain CDC 1551 / Oshkosh).